A 647-amino-acid polypeptide reads, in one-letter code: LIM domain kinase 1 (647 aa).

LIM zinc-binding domains lie at 25–75 and 84–137; these read CASC…CKKD and CHGC…CGHC. Residues 165–258 form the PDZ domain; sequence LVSIPASSHG…LLQLTLEHDP (94 aa). A Phosphoserine modification is found at serine 210. Threonine 229 is modified (phosphothreonine). The segment at 260–319 is disordered; the sequence is DTLGHGLGPETSPLSSPAYTPSGEAGSSARQKPVLRSCSIDRSPGAGSLGSPASQRKDLG. Residues serine 298, serine 302, serine 307, and serine 310 each carry the phosphoserine modification. A compositionally biased stretch (low complexity) spans 302-313; that stretch reads SPGAGSLGSPAS. Phosphoserine; by MAPKAPK2 is present on serine 323. A Phosphoserine modification is found at serine 337. Residues 339-604 form the Protein kinase domain; it reads LIHGEVLGKG…PSFVKLEHWL (266 aa). Residues 345–353 and lysine 368 each bind ATP; that span reads LGKGCFGQA. Aspartate 460 is an active-site residue. Threonine 508 carries the post-translational modification Phosphothreonine; by ROCK1 and PAK1.

Belongs to the protein kinase superfamily. TKL Ser/Thr protein kinase family. In terms of assembly, interacts (via LIM domain) with the cytoplasmic domain of NRG1. Interacts with NISCH. Interacts with RLIM and RNF6. Self-associates to form homodimers. Interacts with HSP90AA1; this interaction promotes LIMK1 dimerization and subsequent transphosphorylation. Interacts with CDKN1C. Interacts with SSH1. Interacts with ROCK1. Interacts (via LIM zinc-binding domains) with FAM89B/LRAP25 (via LRR repeat). Forms a tripartite complex with CDC42BPA, CDC42BPB and FAM89B/LRAP25. Post-translationally, autophosphorylated. Phosphorylated on Thr-508 by ROCK1 and PAK1, resulting in activation. Phosphorylated by PAK4 which increases the ability of LIMK1 to phosphorylate cofilin. Phosphorylated at Ser-323 by MAPKAPK2 during activation of VEGFA-induced signaling, which results in activation of LIMK1 and promotion of actin reorganization, cell migration, and tubule formation of endothelial cells. Dephosphorylated and inactivated by SSH1. Phosphorylated by CDC42BP. In terms of processing, ubiquitinated. 'Lys-48'-linked polyubiquitination by RNF6 leads to proteasomal degradation through the 26S proteasome, modulating LIMK1 levels in the growth cone and its effect on axonal outgrowth. Also polyubiquitinated by RLIM. In terms of tissue distribution, highest expression in both adult and fetal nervous system. Detected ubiquitously throughout the different regions of adult brain, with highest levels in the cerebral cortex. Expressed to a lesser extent in heart and skeletal muscle.

The protein localises to the cytoplasm. It localises to the nucleus. It is found in the cytoskeleton. Its subcellular location is the cell projection. The protein resides in the lamellipodium. It carries out the reaction L-seryl-[protein] + ATP = O-phospho-L-seryl-[protein] + ADP + H(+). It catalyses the reaction L-threonyl-[protein] + ATP = O-phospho-L-threonyl-[protein] + ADP + H(+). Serine/threonine-protein kinase that plays an essential role in the regulation of actin filament dynamics. Acts downstream of several Rho family GTPase signal transduction pathways. Activated by upstream kinases including ROCK1, PAK1 and PAK4, which phosphorylate LIMK1 on a threonine residue located in its activation loop. LIMK1 subsequently phosphorylates and inactivates the actin binding/depolymerizing factors cofilin-1/CFL1, cofilin-2/CFL2 and destrin/DSTN, thereby preventing the cleavage of filamentous actin (F-actin), and stabilizing the actin cytoskeleton. In this way LIMK1 regulates several actin-dependent biological processes including cell motility, cell cycle progression, and differentiation. Phosphorylates TPPP on serine residues, thereby promoting microtubule disassembly. Stimulates axonal outgrowth and may be involved in brain development. Functionally, has a dominant negative effect on actin cytoskeletal changes. Required for atypical chemokine receptor ACKR2-induced phosphorylation of cofilin (CFL1). In Homo sapiens (Human), this protein is LIM domain kinase 1 (LIMK1).